Reading from the N-terminus, the 93-residue chain is MAKCTKKVGGIVSKYRTHHGASLWKMVKEIEISQHTKYTCSFCGKTKMKRRAVKIRHCNSCMKTVAGSAWTYNTTSAVMVKSAIRRLKELKDQ.

The C4-type zinc finger occupies cysteine 40 to cysteine 61.

Belongs to the eukaryotic ribosomal protein eL43 family.

The polypeptide is Putative ribosomal protein eL43-like (RPL37AP8) (Homo sapiens (Human)).